A 952-amino-acid polypeptide reads, in one-letter code: Bromodomain testis-specific protein (952 aa).

The Bromo 1 domain maps to 26–132 (RLTNQLQFLQ…KLFMQKLSQM (107 aa)). Basic and acidic residues predominate over residues 141–150 (GKERMKKDIQ). Residues 141–168 (GKERMKKDIQQKTAVSSAKEQTPSKSAE) form a disordered region. Residues 151-167 (QKTAVSSAKEQTPSKSA) show a composition bias toward polar residues. At Ser-186 the chain carries Phosphoserine. A Nuclear localization signal motif is present at residues 208–219 (KGVKRRADTTTP). Positions 209-257 (GVKRRADTTTPTTSSAKASSESPPPLREAKPANAPVKENTVKSVLPDSQ) are disordered. Residues 216–229 (TTTPTTSSAKASSE) show a composition bias toward low complexity. Residues 266 to 375 (VKVTEQLKHC…DVFEMHFAKI (110 aa)) enclose the Bromo 2 domain. 4 disordered regions span residues 392–420 (SAKA…ERVQ), 442–504 (VPLR…NAKP), 607–746 (QLNC…GCQV), and 850–930 (KHLE…RREA). Residues 417–442 (ERVQRLAKLQEQLNAVHQQLQVLSQV) adopt a coiled-coil conformation. A compositionally biased stretch (basic residues) spans 445–463 (RKLKKKNEKSKRAPKRKKV). The 83-residue stretch at 495 to 577 (KLEEEDNAKP…ACLRKRSLKP (83 aa)) folds into the NET domain. Over residues 610 to 619 (CRKRQTKRPA) the composition is skewed to basic residues. Residues 625-638 (PRPPLPPPPPPPPE) are compositionally biased toward pro residues. Residues 646–681 (SDSSSSSSSSGSGSSSSSSSSSGSGSSSSDSSSSDS) are compositionally biased toward low complexity. Positions 718–729 (SAETALVQQSTG) are enriched in polar residues. Residues 837–936 (EKEVKARTQE…RREAMAGTID (100 aa)) are a coiled coil. Basic and acidic residues predominate over residues 850–867 (KHLEHSAKDPKVSQESQR). The segment covering 874–883 (TPESSSNKVQ) has biased composition (polar residues). The span at 893–902 (EQQQLPSPSE) shows a compositional bias: low complexity. The segment covering 911–930 (LLKDRNLAREKEQERRRREA) has biased composition (basic and acidic residues).

It belongs to the BET family. As to quaternary structure, interacts with the acetylated N-terminus of histone H1, H2, H3 and H4. Interacts with P-TEFb components CDK9 and CCNT1/cyclin-T1. Interacts with mRNA splicing machinery proteins SRSF2, DDX5, HNRNPK and TARDBP. Interacts with SMARCE1. Post-translationally, ubiquitinated in a SPOP-dependent manner, leading to proteasomal degradation.

It localises to the nucleus. In terms of biological role, testis-specific chromatin protein that specifically binds histone H4 acetylated at 'Lys-5' and 'Lys-8' (H4K5ac and H4K8ac, respectively) and plays a key role in spermatogenesis. Required in late pachytene spermatocytes: plays a role in meiotic and post-meiotic cells by binding to acetylated histones at the promoter of specific meiotic and post-meiotic genes, facilitating their activation at the appropriate time. In the post-meiotic phase of spermatogenesis, binds to hyperacetylated histones and participates in their general removal from DNA. Also recognizes and binds a subset of butyrylated histones: able to bind histone H4 butyrylated at 'Lys-8' (H4K8ac), while it is not able to bind H4 butyrylated at 'Lys-5' (H4K5ac). Also acts as a component of the splicing machinery in pachytene spermatocytes and round spermatids and participates in 3'-UTR truncation of specific mRNAs in post-meiotic spermatids. Required for chromocenter organization, a structure comprised of peri-centromeric heterochromatin. In Rattus norvegicus (Rat), this protein is Bromodomain testis-specific protein (Brdt).